The following is a 268-amino-acid chain: Peptide transport system ATP-binding protein SapF (268 aa).

One can recognise an ABC transporter domain in the interval 6–251 (LEVRNLSKTF…PLHELTKRLI (246 aa)). 47–54 (GENGSGKS) is an ATP binding site.

This sequence belongs to the ABC transporter superfamily.

It is found in the cell inner membrane. Its function is as follows. Involved in a peptide intake transport system that plays a role in the resistance to antimicrobial peptides. The protein is Peptide transport system ATP-binding protein SapF (sapF) of Escherichia coli O6:H1 (strain CFT073 / ATCC 700928 / UPEC).